Here is a 237-residue protein sequence, read N- to C-terminus: Phosphatidylserine decarboxylase proenzyme (237 aa).

Ser-206 acts as the Schiff-base intermediate with substrate; via pyruvic acid in catalysis. Ser-206 carries the post-translational modification Pyruvic acid (Ser); by autocatalysis.

This sequence belongs to the phosphatidylserine decarboxylase family. PSD-A subfamily. As to quaternary structure, heterodimer of a large membrane-associated beta subunit and a small pyruvoyl-containing alpha subunit. Requires pyruvate as cofactor. Is synthesized initially as an inactive proenzyme. Formation of the active enzyme involves a self-maturation process in which the active site pyruvoyl group is generated from an internal serine residue via an autocatalytic post-translational modification. Two non-identical subunits are generated from the proenzyme in this reaction, and the pyruvate is formed at the N-terminus of the alpha chain, which is derived from the carboxyl end of the proenzyme. The post-translation cleavage follows an unusual pathway, termed non-hydrolytic serinolysis, in which the side chain hydroxyl group of the serine supplies its oxygen atom to form the C-terminus of the beta chain, while the remainder of the serine residue undergoes an oxidative deamination to produce ammonia and the pyruvoyl prosthetic group on the alpha chain.

Its subcellular location is the cell membrane. The catalysed reaction is a 1,2-diacyl-sn-glycero-3-phospho-L-serine + H(+) = a 1,2-diacyl-sn-glycero-3-phosphoethanolamine + CO2. It functions in the pathway phospholipid metabolism; phosphatidylethanolamine biosynthesis; phosphatidylethanolamine from CDP-diacylglycerol: step 2/2. In terms of biological role, catalyzes the formation of phosphatidylethanolamine (PtdEtn) from phosphatidylserine (PtdSer). This chain is Phosphatidylserine decarboxylase proenzyme, found in Mycobacteroides abscessus (strain ATCC 19977 / DSM 44196 / CCUG 20993 / CIP 104536 / JCM 13569 / NCTC 13031 / TMC 1543 / L948) (Mycobacterium abscessus).